The following is a 562-amino-acid chain: NAD-dependent malic enzyme (562 aa).

Tyr101 serves as the catalytic Proton donor. Arg154 is an NAD(+) binding site. Residue Lys172 is the Proton acceptor of the active site. Residues Glu243, Asp244, and Asp267 each coordinate a divalent metal cation. The NAD(+) site is built by Asp267 and Asn415.

It belongs to the malic enzymes family. In terms of assembly, homotetramer. Mg(2+) is required as a cofactor. The cofactor is Mn(2+).

The enzyme catalyses (S)-malate + NAD(+) = pyruvate + CO2 + NADH. It catalyses the reaction oxaloacetate + H(+) = pyruvate + CO2. In Shewanella putrefaciens (strain CN-32 / ATCC BAA-453), this protein is NAD-dependent malic enzyme.